Consider the following 688-residue polypeptide: MAKIRVYELAKELNISSKELITLLEEEFSVEVKNHMSAIEDEDADLIKELLSGKEKSEKTKEEDDEIETTAKNPIKESINNKKSNKRDDKNEKVNTENAEDMAIITMTSDTITVKEISDKLEKSYAEVIKELMLMGVMASVNQEINFEMAEKLAAKFDTEILKEEQDEEDDLEDILKDSEEEENLQKRSPIITVMGHVDHGKTSLLDAIRKSKVTSTEAGGITQHIGAYTVELNGESITFLDTPGHAAFTAMRARGAQVTDIVILVVAADDGIMPQTKEAISHCKAAEVPLIVAINKIDRPGANIDKVKQELTEYGLVAEDWGGDTVCVPVSAHTKEGIDELLEMILLSSEILELKANPNRKAKGTVVEAKLDKGRGPVATLLVQNGTLTVGDSIVVGSTYGRIRAMFNDKGENIQSAGPSTPVGILGLSEVPEAGDKFYQVKDEKTARGIADKRKEKIRDEYLQSTHKVSLEDLYNQIREGKVKELGLIVKADVQGSVEALKQSLEKLSTEEVKVRVIHGGVGAINETDVTLATASNGIILGFNVRPDNNAIIASERDGVDIKTYRVIYDAIEDIKSAMLGMLEPEFKEVVIGTAEVRQVYKISSVGTIAGAYVQTGKLARNAGARVIRDGIVIFESELASLKRFKDDAKEVAQGYECGLSIEKFNDIKEGDIIECFIMEEIKKKTL.

Positions 50 to 62 are enriched in basic and acidic residues; the sequence is LLSGKEKSEKTKE. The interval 50–95 is disordered; that stretch reads LLSGKEKSEKTKEEDDEIETTAKNPIKESINNKKSNKRDDKNEKVN. A compositionally biased stretch (low complexity) spans 72-82; sequence KNPIKESINNK. Basic and acidic residues predominate over residues 86-95; sequence KRDDKNEKVN. A tr-type G domain is found at 187-354; sequence KRSPIITVMG…MILLSSEILE (168 aa). The interval 196–203 is G1; that stretch reads GHVDHGKT. 196 to 203 is a binding site for GTP; that stretch reads GHVDHGKT. Residues 221–225 are G2; that stretch reads GITQH. The tract at residues 242-245 is G3; that stretch reads DTPG. GTP contacts are provided by residues 242-246 and 296-299; these read DTPGH and NKID. The segment at 296–299 is G4; the sequence is NKID. Residues 332 to 334 are G5; that stretch reads SAH.

This sequence belongs to the TRAFAC class translation factor GTPase superfamily. Classic translation factor GTPase family. IF-2 subfamily.

The protein localises to the cytoplasm. In terms of biological role, one of the essential components for the initiation of protein synthesis. Protects formylmethionyl-tRNA from spontaneous hydrolysis and promotes its binding to the 30S ribosomal subunits. Also involved in the hydrolysis of GTP during the formation of the 70S ribosomal complex. The protein is Translation initiation factor IF-2 of Clostridium botulinum (strain Langeland / NCTC 10281 / Type F).